The following is a 290-amino-acid chain: 4-diphosphocytidyl-2-C-methyl-D-erythritol kinase (290 aa).

Lys11 is a catalytic residue. 97–107 is a binding site for ATP; the sequence is PVAAGIGGGSS. Residue Asp139 is part of the active site.

The protein belongs to the GHMP kinase family. IspE subfamily.

The enzyme catalyses 4-CDP-2-C-methyl-D-erythritol + ATP = 4-CDP-2-C-methyl-D-erythritol 2-phosphate + ADP + H(+). It functions in the pathway isoprenoid biosynthesis; isopentenyl diphosphate biosynthesis via DXP pathway; isopentenyl diphosphate from 1-deoxy-D-xylulose 5-phosphate: step 3/6. Catalyzes the phosphorylation of the position 2 hydroxy group of 4-diphosphocytidyl-2C-methyl-D-erythritol. The sequence is that of 4-diphosphocytidyl-2-C-methyl-D-erythritol kinase from Methylobacterium radiotolerans (strain ATCC 27329 / DSM 1819 / JCM 2831 / NBRC 15690 / NCIMB 10815 / 0-1).